The primary structure comprises 91 residues: Probable Fe(2+)-trafficking protein (91 aa).

This sequence belongs to the Fe(2+)-trafficking protein family.

Functionally, could be a mediator in iron transactions between iron acquisition and iron-requiring processes, such as synthesis and/or repair of Fe-S clusters in biosynthetic enzymes. This chain is Probable Fe(2+)-trafficking protein, found in Glaesserella parasuis serovar 5 (strain SH0165) (Haemophilus parasuis).